A 381-amino-acid polypeptide reads, in one-letter code: Chaperone protein DnaJ (381 aa).

The region spanning 5 to 70 is the J domain; the sequence is DFYEVLGVSR…QKKAAYDQYG (66 aa). Residues 136–214 form a CR-type zinc finger; sequence GVSKEIEVPT…CHGQGRKQKT (79 aa). Zn(2+)-binding residues include cysteine 149, cysteine 152, cysteine 166, cysteine 169, cysteine 188, cysteine 191, cysteine 202, and cysteine 205. CXXCXGXG motif repeat units lie at residues 149–156, 166–173, 188–195, and 202–209; these read CDICDGSG, CGTCHGHG, CPTCNGKG, and CNSCHGQG.

It belongs to the DnaJ family. In terms of assembly, homodimer. The cofactor is Zn(2+).

It localises to the cytoplasm. In terms of biological role, participates actively in the response to hyperosmotic and heat shock by preventing the aggregation of stress-denatured proteins and by disaggregating proteins, also in an autonomous, DnaK-independent fashion. Unfolded proteins bind initially to DnaJ; upon interaction with the DnaJ-bound protein, DnaK hydrolyzes its bound ATP, resulting in the formation of a stable complex. GrpE releases ADP from DnaK; ATP binding to DnaK triggers the release of the substrate protein, thus completing the reaction cycle. Several rounds of ATP-dependent interactions between DnaJ, DnaK and GrpE are required for fully efficient folding. Also involved, together with DnaK and GrpE, in the DNA replication of plasmids through activation of initiation proteins. This Vibrio atlanticus (strain LGP32) (Vibrio splendidus (strain Mel32)) protein is Chaperone protein DnaJ.